Here is a 687-residue protein sequence, read N- to C-terminus: MDTLEPTAVDTHVSAEQILRDVYKKGQKARGSTNIDILDLEELREYQRRKRTEYEGYLKRNRLDMGQWIRYAQFEIEQHDMRRARSIFERALLVDSSFIPLWIRYIDAELKVKCINHARNLMNRAISTLPRVDKLWYKYLIVEESLNNVEIVRSLYTKWCSLEPGVNAWNSFVDFEIRQKNWNGVREIYSKYVMAHPQMQTWLKWVRFENRHGNTEFTRSVYSLAIDTVANLQNLQIWSDMEVAKLVNSFAHWEAAQQEYERSSALYQIAIEKWPSNQLLKAGLLDFEKQFGDINSIEETISYKRKMEYETILSNNAYDYDTWWLYLDLISESFPKQIMQTFEKAIVDSRPKELSKNVQWKRYIYLWMRYICYVELELENSLLEEELFQRLIDDIIPHKHFTFSKIWLMYAKFLIRHDDVPKARKILGKAIGLCPKAKTFKGYIELEVKLKEFDRVRKIYEKFIEFQPSDLQIWSQYGELEENLGDWDRVRGIYTIALDENSDFLTKEAKIVLLQKYITFETESQEFEKARKLYRRYLELNQYSPQSWIEFAMYQTSTPTEQQLLDLAKLQSENVDEDIEFEITDENKLEARKVFEEAIVFFKEKDDKQGRLSILEALKDYEETYGTELDQETVKKRFPKVIKKVRLQNGVEEEFVDYIFPDDIDDDKPKPSKFLELAKKWKQEQAL.

HAT repeat units follow at residues 45-77 (EYQR…FEIE), 79-111 (HDMR…AELK), 113-145 (KCIN…VEES), 147-178 (NNVE…FEIR), 180-211 (KNWN…FENR), 213-247 (GNTE…AKLV), 251-283 (AHWE…LKAG), 300-332 (TISY…LISE), 337-369 (QIMQ…LWMR), 383-416 (LEEE…FLIR), 451-483 (KEFD…LEEN), 525-557 (QEFE…YQTS), and 629-661 (LDQE…YIFP).

Belongs to the crooked-neck family. Belongs to the NTC complex (or PRP19-associated complex), composed of at least CEF1, CLF1, ISY1, NTC20, SNT309, SYF1, SYF2, and PRP19. The NTC complex associates with the spliceosome after the release of the U1 and U4 snRNAs and forms the CWC spliceosome subcomplex (or CEF1-associated complex) reminiscent of a late-stage spliceosome composed also of the U2, U5 and U6 snRNAs and at least BUD13, BUD31, BRR2, CDC40, CUS1, CWC2, CWC15, CWC21, CWC22, CWC23, CWC24, CWC25, CWC27, ECM2, HSH155, IST3, LEA1, MSL1, PRP8, PRP9, PRP11, PRP21, PRP22, PRP45, PRP46, SLU7, SMB1, SMD1, SMD2, SMD3, SMX2, SMX3, SNU114, SPP2, RSE1 and YJU2. Interacts with CEF1, ISY1, MUD2, NTC20, PRP22, PRP40, PRP46, SYF1, SYF2, and the ORC2 subunit of the origin recognition complex.

The protein resides in the nucleus. Functionally, involved in pre-mRNA splicing and cell cycle progression. Required for the spliceosome assembly by promoting the functional integration of the U4/U6.U5 tri-snRNP particle into the U1-, U2-dependent pre-spliceosome. Also recruits PRP19 to the spliceosome, as a component of the NTC complex (or PRP19-associated complex). The association of the NTC complex to the spliceosome mediates conformational rearrangement or stabilizes the structure of the spliceosome after U4 snRNA dissociation, which leads to spliceosome maturation. Required for initiation of the DNA replication by binding the RNA replication origins, probably through its interaction with the origin recognition complex (ORC). This Saccharomyces cerevisiae (strain ATCC 204508 / S288c) (Baker's yeast) protein is Pre-mRNA-splicing factor CLF1 (CLF1).